Here is a 252-residue protein sequence, read N- to C-terminus: Expansin-A12 (252 aa).

The N-terminal stretch at 1-23 (MDMKGTYLVTVILLVSTLSVGMC) is a signal peptide. The 112-residue stretch at 45-156 (GGACGYDNPY…RRVGCKRRGG (112 aa)) folds into the Expansin-like EG45 domain. The Expansin-like CBD domain occupies 166–246 (NFNMVMISNV…SWWFGQTFSS (81 aa)).

This sequence belongs to the expansin family. Expansin A subfamily.

Its subcellular location is the secreted. It localises to the cell wall. The protein resides in the membrane. In terms of biological role, causes loosening and extension of plant cell walls by disrupting non-covalent bonding between cellulose microfibrils and matrix glucans. No enzymatic activity has been found. The chain is Expansin-A12 (EXPA12) from Arabidopsis thaliana (Mouse-ear cress).